We begin with the raw amino-acid sequence, 402 residues long: Phosphoglycerate kinase (402 aa).

Substrate-binding positions include 24-26, R40, 63-66, R122, and R155; these read DFN and HFGR. ATP is bound by residues K206, G297, E328, and 357–360; that span reads GGDS.

This sequence belongs to the phosphoglycerate kinase family. As to quaternary structure, monomer.

It localises to the cytoplasm. It carries out the reaction (2R)-3-phosphoglycerate + ATP = (2R)-3-phospho-glyceroyl phosphate + ADP. The protein operates within carbohydrate degradation; glycolysis; pyruvate from D-glyceraldehyde 3-phosphate: step 2/5. The protein is Phosphoglycerate kinase of Synechococcus sp. (strain CC9311).